A 565-amino-acid polypeptide reads, in one-letter code: uncharacterized protein (565 aa).

5 helical membrane passes run 4–26, 33–55, 68–90, 97–119, and 162–184; these read FVQF…AVWV, GYGL…VGAA, SLLY…VNAL, YAIL…TQFF, and ISAM…IILL. RCK C-terminal domains are found at residues 210-295 and 296-379; these read PNVD…LGPE and VPDA…IFGV. Helical transmembrane passes span 389 to 411, 415 to 432, 453 to 472, 482 to 504, and 539 to 561; these read LLTL…PAFG, GLGN…VSSI, LGLI…DLLT, IFIV…GFHI, and WLGF…YFAM.

It belongs to the AAE transporter (TC 2.A.81) family.

It is found in the cell membrane. This is an uncharacterized protein from Bordetella bronchiseptica (strain ATCC BAA-588 / NCTC 13252 / RB50) (Alcaligenes bronchisepticus).